Consider the following 281-residue polypeptide: MTNAKKVRARRKIRRTAAGAMALAVGLTGAGILVNAVTPDAQVATAQQDEQALIQEGKDLYDVACITCHGANLQGVKDRGPSLIGVGSGATYFQVHSGRMPMLRNEAQAKRKTPRYSEAQTLAIAAYVEANGGGPSIVYNKDGSVAMESLRGANYKDGIDPADVARGSDLFRLNCASCHNFTGRGGALSSGKYAPVLDPANEQEIYQAMLTGPQNMPKFSDRQLSADEKKDIIAYIKSAKETPSQGGWNLGGLGPVTEGMMMWLVGIVVLVAAAMWIGSRS.

Residues 17–37 form a helical membrane-spanning segment; sequence AAGAMALAVGLTGAGILVNAV. Cytochrome c domains lie at 52–132 and 162–240; these read ALIQ…EANG and ADVA…KSAK. Heme c-binding residues include Cys-65, Cys-68, His-69, Cys-175, Cys-178, and His-179. A helical transmembrane segment spans residues 259–279; sequence GMMMWLVGIVVLVAAAMWIGS.

In terms of assembly, the cytochrome bc1 complex is composed of a cytochrome b (QcrB), the Rieske iron-sulfur protein (QcrA) and a diheme cytochrome c (QcrC) subunit. The bc1 complex forms a supercomplex with cytochrome c oxidase (cytochrome aa3). Post-translationally, binds 2 heme c groups covalently per subunit.

The protein localises to the cell membrane. The enzyme catalyses a quinol + 2 Fe(III)-[cytochrome c](out) = a quinone + 2 Fe(II)-[cytochrome c](out) + 2 H(+)(out). Functionally, cytochrome c1 subunit of the cytochrome bc1 complex, an essential component of the respiratory electron transport chain required for ATP synthesis. The bc1 complex catalyzes the oxidation of menaquinol and the reduction of cytochrome c in the respiratory chain. The bc1 complex operates through a Q-cycle mechanism that couples electron transfer to generation of the proton gradient that drives ATP synthesis. The sequence is that of Cytochrome bc1 complex cytochrome c subunit (qcrC) from Corynebacterium diphtheriae (strain ATCC 700971 / NCTC 13129 / Biotype gravis).